The primary structure comprises 144 residues: Large ribosomal subunit protein uL11 (144 aa).

Belongs to the universal ribosomal protein uL11 family. In terms of assembly, part of the ribosomal stalk of the 50S ribosomal subunit. Interacts with L10 and the large rRNA to form the base of the stalk. L10 forms an elongated spine to which L12 dimers bind in a sequential fashion forming a multimeric L10(L12)X complex. Post-translationally, one or more lysine residues are methylated.

Its function is as follows. Forms part of the ribosomal stalk which helps the ribosome interact with GTP-bound translation factors. This is Large ribosomal subunit protein uL11 from Corynebacterium glutamicum (strain R).